The chain runs to 132 residues: Agouti-signaling protein (132 aa).

An N-terminal signal peptide occupies residues 1-22 (MDVTRLLLATLLVFLCFFTAYS). N-linked (GlcNAc...) asparagine glycosylation occurs at Asn-39. The segment at 60–88 (KQISRKEAEKKRSSKKEASMKKVARPRTP) is disordered. The span at 63 to 79 (SRKEAEKKRSSKKEASM) shows a compositional bias: basic and acidic residues. Intrachain disulfides connect Cys-93/Cys-108, Cys-100/Cys-114, Cys-107/Cys-125, Cys-111/Cys-132, and Cys-116/Cys-123. An Agouti domain is found at 93 to 132 (CVATRDSCKPPAPACCDPCASCQCRFFRSACSCRVLSLNC).

It is found in the secreted. Its function is as follows. Involved in the regulation of melanogenesis. The binding of ASP to MC1R precludes alpha-MSH initiated signaling and thus blocks production of cAMP, leading to a down-regulation of eumelanogenesis (brown/black pigment) and thus increasing synthesis of pheomelanin (yellow/red pigment). This is Agouti-signaling protein (ASIP) from Macaca cyclopis (Taiwan macaque).